The sequence spans 322 residues: ATP-dependent 6-phosphofructokinase (322 aa).

Residue G11 participates in ATP binding. 21-25 is a binding site for ADP; that stretch reads RAVVR. Residues 72–73 and 102–105 each bind ATP; these read RC and GDGS. D103 contributes to the Mg(2+) binding site. A substrate-binding site is contributed by 127 to 129; sequence TID. D129 functions as the Proton acceptor in the catalytic mechanism. An ADP-binding site is contributed by R156. Residues R164 and 171–173 contribute to the substrate site; that span reads MGR. ADP-binding positions include 187–189, R213, and 215–217; these read GAE and KKH. Residues E224, R245, and 251–254 each bind substrate; that span reads HIQR.

Belongs to the phosphofructokinase type A (PFKA) family. ATP-dependent PFK group I subfamily. Prokaryotic clade 'B1' sub-subfamily. In terms of assembly, homotetramer. Mg(2+) is required as a cofactor.

The protein localises to the cytoplasm. The enzyme catalyses beta-D-fructose 6-phosphate + ATP = beta-D-fructose 1,6-bisphosphate + ADP + H(+). Its pathway is carbohydrate degradation; glycolysis; D-glyceraldehyde 3-phosphate and glycerone phosphate from D-glucose: step 3/4. With respect to regulation, allosterically activated by ADP and other diphosphonucleosides, and allosterically inhibited by phosphoenolpyruvate. In terms of biological role, catalyzes the phosphorylation of D-fructose 6-phosphate to fructose 1,6-bisphosphate by ATP, the first committing step of glycolysis. This is ATP-dependent 6-phosphofructokinase from Staphylococcus carnosus (strain TM300).